Reading from the N-terminus, the 846-residue chain is Homeobox protein 12 (846 aa).

Composition is skewed to low complexity over residues 78 to 94, 160 to 170, 237 to 249, 289 to 301, 309 to 321, 331 to 352, 394 to 443, and 458 to 482; these read IIGS…VQAT, PLSSSSTVVPA, GNHN…YNYN, QPQS…QLQP, LQPQ…QSQQ, NNNN…NNNN, NYNQ…SNSN, and NNNN…QQIY. 6 disordered regions span residues 78-103, 151-177, 230-249, 286-374, 394-482, and 515-571; these read IIGS…PSSS, IVQP…PPSV, NGNG…YNYN, GTKQ…SSSP, NYNQ…QQIY, and FKQN…NNQF. The segment covering 524–546 has biased composition (acidic residues); it reads NNDDDDDDDDDEEEEEEEEDDND. A coiled-coil region spans residues 553-604; sequence SYDEENNNNNNNNNNNNQFKNESIIIGDNYYEIINDRIKSIKQKLHFLEKNS. The segment covering 559-569 has biased composition (low complexity); it reads NNNNNNNNNNN. Residues 773-835 constitute a DNA-binding region (homeobox); the sequence is DKKNRRTLND…NKRSREKNQR (63 aa).

Its subcellular location is the nucleus. Its function is as follows. Putative transcription factor. This Dictyostelium discoideum (Social amoeba) protein is Homeobox protein 12 (hbx12).